Reading from the N-terminus, the 299-residue chain is Protoheme IX farnesyltransferase (299 aa).

A run of 9 helical transmembrane segments spans residues Val-29–Val-49, Leu-51–Met-71, His-100–Val-120, Leu-123–Leu-143, Asn-150–Thr-170, Gly-177–Ile-197, Cys-223–Met-243, Ser-244–Trp-264, and Ala-275–Val-295.

It belongs to the UbiA prenyltransferase family. Protoheme IX farnesyltransferase subfamily.

It localises to the cell inner membrane. The enzyme catalyses heme b + (2E,6E)-farnesyl diphosphate + H2O = Fe(II)-heme o + diphosphate. It functions in the pathway porphyrin-containing compound metabolism; heme O biosynthesis; heme O from protoheme: step 1/1. Functionally, converts heme B (protoheme IX) to heme O by substitution of the vinyl group on carbon 2 of heme B porphyrin ring with a hydroxyethyl farnesyl side group. In Shewanella amazonensis (strain ATCC BAA-1098 / SB2B), this protein is Protoheme IX farnesyltransferase.